The chain runs to 310 residues: Vomeronasal type-1 receptor 50 (310 aa).

The Extracellular segment spans residues 1 to 16; that stretch reads MSKANLLHTDNNMKIT. Residues 17-37 traverse the membrane as a helical segment; that stretch reads LFSEVSVGISANSILFVVHLC. The Cytoplasmic portion of the chain corresponds to 38 to 50; the sequence is KLLHENKPKPIDL. Residues 51-71 form a helical membrane-spanning segment; that stretch reads YIAFFSITQLMLLITMGLIAV. At 72–93 the chain is on the extracellular side; the sequence is DMFMPWGRWDSTTCQSLIYLHR. Cys85 and Cys172 form a disulfide bridge. Residues 94–114 traverse the membrane as a helical segment; sequence LLRGLTFCATCLLNVLWTITL. Residues 115-134 lie on the Cytoplasmic side of the membrane; that stretch reads SPRSSCLTKFKHKSPHHISG. Residues 135–155 form a helical membrane-spanning segment; it reads AFLFFCVLYMSFSSHLLVSII. Residues 156–193 lie on the Extracellular side of the membrane; the sequence is ATFNSTSDNFLYVTQSCSILPVSYSRTSILSTMMTMRE. N-linked (GlcNAc...) asparagine glycosylation occurs at Asn159. Residues 194–214 form a helical membrane-spanning segment; it reads AFLIGLMALSSGYVVVLLWRH. At 215–237 the chain is on the cytoplasmic side; it reads KKQARHLHSTSLSSKASPEQRAT. The chain crosses the membrane as a helical span at residues 238–258; the sequence is STIMLLMGFFVVLYILDTVIF. At 259–269 the chain is on the extracellular side; sequence QARLKFKDVST. Residues 270–290 traverse the membrane as a helical segment; it reads FFCVKIIISHSYATFSPFVFI. The Cytoplasmic portion of the chain corresponds to 291-310; the sequence is CNDKYMIKFVTSMCGRIVNV.

Belongs to the G-protein coupled receptor 1 family. Expressed in a subset of sensory neurons located in the apical layer of the vomeronasal organ.

It localises to the cell membrane. In terms of biological role, putative pheromone receptor implicated in the regulation of social and reproductive behavior. The polypeptide is Vomeronasal type-1 receptor 50 (Vmn1r50) (Mus musculus (Mouse)).